The sequence spans 217 residues: Probable GTP-binding protein EngB (217 aa).

The region spanning 37–214 is the EngB-type G domain; that stretch reads SGLEVAFAGR…RAAMARLIGD (178 aa). GTP-binding positions include 45–52, 72–76, 92–95, 159–162, and 193–195; these read GRSNVGKS, GRTQE, DMPG, TKAD, and TSS. S52 and T74 together coordinate Mg(2+).

This sequence belongs to the TRAFAC class TrmE-Era-EngA-EngB-Septin-like GTPase superfamily. EngB GTPase family. Mg(2+) is required as a cofactor.

In terms of biological role, necessary for normal cell division and for the maintenance of normal septation. This is Probable GTP-binding protein EngB from Nitrobacter winogradskyi (strain ATCC 25391 / DSM 10237 / CIP 104748 / NCIMB 11846 / Nb-255).